The primary structure comprises 337 residues: Phosphate acyltransferase (337 aa).

This sequence belongs to the PlsX family. Homodimer. Probably interacts with PlsY.

Its subcellular location is the cytoplasm. The enzyme catalyses a fatty acyl-[ACP] + phosphate = an acyl phosphate + holo-[ACP]. It participates in lipid metabolism; phospholipid metabolism. In terms of biological role, catalyzes the reversible formation of acyl-phosphate (acyl-PO(4)) from acyl-[acyl-carrier-protein] (acyl-ACP). This enzyme utilizes acyl-ACP as fatty acyl donor, but not acyl-CoA. This Halalkalibacterium halodurans (strain ATCC BAA-125 / DSM 18197 / FERM 7344 / JCM 9153 / C-125) (Bacillus halodurans) protein is Phosphate acyltransferase.